Here is a 581-residue protein sequence, read N- to C-terminus: Arginine--tRNA ligase (581 aa).

Positions 126 to 136 (PNLAKEMHVGH) match the 'HIGH' region motif.

Belongs to the class-I aminoacyl-tRNA synthetase family. In terms of assembly, monomer.

It is found in the cytoplasm. It catalyses the reaction tRNA(Arg) + L-arginine + ATP = L-arginyl-tRNA(Arg) + AMP + diphosphate. In Shewanella loihica (strain ATCC BAA-1088 / PV-4), this protein is Arginine--tRNA ligase.